Here is a 586-residue protein sequence, read N- to C-terminus: Glutamine--tRNA ligase (586 aa).

A 'HIGH' region motif is present at residues 58–68 (PEPNGYLHIGH). ATP-binding positions include 59–61 (EPN) and 65–71 (HIGHAKS). The L-glutamine site is built by Asp91 and Tyr240. Residues Thr259 and 294–295 (RL) each bind ATP. The short motif at 301–305 (VTSKR) is the 'KMSKS' region element.

The protein belongs to the class-I aminoacyl-tRNA synthetase family. In terms of assembly, monomer.

It is found in the cytoplasm. It catalyses the reaction tRNA(Gln) + L-glutamine + ATP = L-glutaminyl-tRNA(Gln) + AMP + diphosphate. The sequence is that of Glutamine--tRNA ligase from Bordetella avium (strain 197N).